The sequence spans 669 residues: MGSDPSAPGRPGWTGSLLGDREEAARPRLLPLLLVLLGCLGLGVAAEDAEVHAENWLRLYGYLPQPSRHMSTMRSAQILASALAEMQRFYGIPVTGVLDEETKEWMKRPRCGVPDQFGVRVKANLRRRRKRYALTGRKWNNHHLTFSIQNYTEKLGWYHSMEAVRRAFRVWEQATPLVFQEVPYEDIRLRRQKEADIMVLFASGFHGDSSPFDGTGGFLAHAYFPGPGLGGDTHFDADEPWTFSSTDLHGNNLFLVAVHELGHALGLEHSSNPNAIMAPFYQWKDVDNFKLPEDDLRGIQQLYGTPDGQPQPTQPLPTVTPRRPGRPDHRPPRPPQPPPPGGKPERPPKPGPPVQPRATERPDQYGPNICDGDFDTVAMLRGEMFVFKGRWFWRVRHNRVLDNYPMPIGHFWRGLPGDISAAYERQDGRFVFFKGDRYWLFREANLEPGYPQPLTSYGLGIPYDRIDTAIWWEPTGHTFFFQEDRYWRFNEETQRGDPGYPKPISVWQGIPASPKGAFLSNDAAYTYFYKGTKYWKFDNERLRMEPGYPKSILRDFMGCQEHVEPGPRWPDVARPPFNPHGGAEPGADSAEGDVGDGDGDFGAGVNKDGGSRVVVQMEEVARTVNVVMVLVPLLLLLCVLGLTYALVQMQRKGAPRVLLYCKRSLQEWV.

The or 45 signal peptide spans 1 to 41; it reads MGSDPSAPGRPGWTGSLLGDREEAARPRLLPLLLVLLGCLG. Positions 42 to 131 are excised as a propeptide; sequence LGVAAEDAEV…KANLRRRRKR (90 aa). A Cysteine switch motif is present at residues 109–116; that stretch reads PRCGVPDQ. C111 contacts Zn(2+). Residues 132–625 are Extracellular-facing; that stretch reads YALTGRKWNN…QMEEVARTVN (494 aa). N-linked (GlcNAc...) asparagine glycosylation is present at N150. Zn(2+) is bound at residue H259. The active site involves E260. Residues H263 and H269 each coordinate Zn(2+). The interval 300–370 is disordered; that stretch reads QQLYGTPDGQ…RPDQYGPNIC (71 aa). Residues 305 to 322 show a composition bias toward low complexity; sequence TPDGQPQPTQPLPTVTPR. The segment covering 333-342 has biased composition (pro residues); the sequence is RPPQPPPPGG. Hemopexin repeat units lie at residues 367-415, 416-461, 463-511, and 512-559; these read PNIC…WRGL, PGDI…GLGI, YDRI…QGIP, and ASPK…FMGC. Residues C370 and C559 are joined by a disulfide bond. The tract at residues 574–593 is disordered; sequence RPPFNPHGGAEPGADSAEGD. Residue S589 is modified to Phosphoserine. Residues 626-646 traverse the membrane as a helical segment; the sequence is VVMVLVPLLLLLCVLGLTYAL. Topologically, residues 647 to 669 are cytoplasmic; that stretch reads VQMQRKGAPRVLLYCKRSLQEWV.

It belongs to the peptidase M10A family. Zn(2+) serves as cofactor. It depends on Ca(2+) as a cofactor. Post-translationally, the precursor is cleaved by a furin endopeptidase. Appeared to be synthesized preferentially in liver, placenta, testis, colon and intestine. Substantial amounts are also detected in pancreas, kidney, lung, heart and skeletal muscle.

The protein resides in the membrane. Functionally, endopeptidase that degrades various components of the extracellular matrix. May activate progelatinase A. This chain is Matrix metalloproteinase-15 (MMP15), found in Homo sapiens (Human).